Consider the following 237-residue polypeptide: Insulin-like growth factor-binding protein 6 (237 aa).

Positions 1 to 25 (MTPHRLLPPLLLTLLLAARPGGALA) are cleaved as a signal peptide. One can recognise an IGFBP N-terminal domain in the interval 26-105 (RCPGCGQGVS…LQGRGRCGRA (80 aa)). Cystine bridges form between Cys-27/Cys-30, Cys-38/Cys-42, Cys-55/Cys-61, Cys-69/Cys-82, and Cys-76/Cys-102. The tract at residues 101 to 158 (RCGRARTPSGENPKESKPQAGTARSQDVNRRDQQRNSGTSTTPSRSNSGGVQDTEMGP) is disordered. Positions 135–151 (RNSGTSTTPSRSNSGGV) are enriched in polar residues. The region spanning 156-231 (MGPCRKHLDS…SEGGDGSSLC (76 aa)) is the Thyroglobulin type-1 domain. Disulfide bonds link Cys-159/Cys-186, Cys-197/Cys-208, and Cys-210/Cys-231. Residues 215–237 (GQPLPGSSEGGDGSSLCPTGSSG) form a disordered region.

As to quaternary structure, interacts (via C-terminal domain) with PHB2. Post-translationally, O-glycosylated.

The protein resides in the secreted. IGF-binding proteins prolong the half-life of the IGFs and have been shown to either inhibit or stimulate the growth promoting effects of the IGFs on cell culture. They alter the interaction of IGFs with their cell surface receptors. Activates the MAPK signaling pathway and induces cell migration. The polypeptide is Insulin-like growth factor-binding protein 6 (IGFBP6) (Bos taurus (Bovine)).